The chain runs to 557 residues: Organic cation/carnitine transporter 2 (557 aa).

Residues 1–20 (MRDYDEVTAFLGEWGPFQRL) lie on the Cytoplasmic side of the membrane. The chain crosses the membrane as a helical span at residues 21-41 (IFFLLSASIIPNGFNGMSIVF). Over 42–142 (LAGTPEHRCL…DLVCKDDWKA (101 aa)) the chain is Extracellular. Residues N57, N64, and N91 are each glycosylated (N-linked (GlcNAc...) asparagine). Residues 143–163 (PLTTSLFFVGVLMGSFISGQL) form a helical membrane-spanning segment. Residues 164 to 172 (SDRFGRKNV) lie on the Cytoplasmic side of the membrane. The chain crosses the membrane as a helical span at residues 173-193 (LFLTMGMQTGFSFLQLFSVNF). The Extracellular portion of the chain corresponds to 194–197 (EMFT). A helical membrane pass occupies residues 198-218 (VLFVLVGMGQISNYVAAFVLG). 218–225 (GTEILSKS) is an ATP binding site. Residues 219–232 (TEILSKSIRIIFAT) are Cytoplasmic-facing. A helical membrane pass occupies residues 233-253 (LGVCIFYAFGFMVLPLFAYFI). Topologically, residues 254-257 (RDWR) are extracellular. The helical transmembrane segment at 258–278 (MLLLALTVPGVLCGALWWFIP) threads the bilayer. The Cytoplasmic segment spans residues 279-341 (ESPRWLISQG…YDLVRTRNIR (63 aa)). The chain crosses the membrane as a helical span at residues 342 to 362 (IITIMSIILWLTISVGYFGLS). Residues 363-373 (LDTPNLHGDIY) are Extracellular-facing. Residues 374-394 (VNCFLLAAVEVPAYVLAWLLL) traverse the membrane as a helical segment. Over 395 to 406 (QHLPRRYSISAA) the chain is Cytoplasmic. A helical transmembrane segment spans residues 407–427 (LFLGGSVLLFIQLVPSELFYL). Residues 428–430 (STA) lie on the Extracellular side of the membrane. The chain crosses the membrane as a helical span at residues 431 to 451 (LVMVGKFGITSAYSMVYVYTA). Residues 452-462 (ELYPTVVRNMG) lie on the Cytoplasmic side of the membrane. Residues 463-483 (VGVSSTASRLGSILSPYFVYL) form a helical membrane-spanning segment. Residues 484 to 488 (GAYDR) are Extracellular-facing. At Y486 the chain carries Phosphotyrosine. The helical transmembrane segment at 489-509 (FLPYILMGSLTILTAILTLFF) threads the bilayer. The Cytoplasmic portion of the chain corresponds to 510–557 (PESFGAPLPDTIDQMLRVKGIKQWQIQSQTRTQKDGGESPTVLKSTAF). The segment at 537–557 (SQTRTQKDGGESPTVLKSTAF) is disordered. S548 is subject to Phosphoserine. At T550 the chain carries Phosphothreonine.

The protein belongs to the major facilitator (TC 2.A.1) superfamily. Organic cation transporter (TC 2.A.1.19) family. In terms of assembly, interacts with PDZK1. In terms of tissue distribution, expressed in the proximal and distal tubules and in the glomeruli in the kidney, in the myocardium, valves, and arterioles in the heart, in the labyrinthine layer of the placenta, and in the cortex, hippocampus, and cerebellum in the brain. Expressed in Sertoli cells in testis.

It localises to the cell membrane. The protein localises to the apical cell membrane. It is found in the basal cell membrane. It catalyses the reaction (R)-carnitine(out) + Na(+)(out) = (R)-carnitine(in) + Na(+)(in). The enzyme catalyses O-acetyl-(R)-carnitine(out) + Na(+)(out) = O-acetyl-(R)-carnitine(in) + Na(+)(in). The catalysed reaction is O-propanoyl-(R)-carnitine(out) + Na(+)(out) = O-propanoyl-(R)-carnitine(in) + Na(+)(in). It carries out the reaction glycine betaine(out) + Na(+)(out) = glycine betaine(in) + Na(+)(in). It catalyses the reaction glycine betaine(out) + (R)-carnitine(in) = glycine betaine(in) + (R)-carnitine(out). The enzyme catalyses O-butanoyl-(R)-carnitine(out) + Na(+)(out) = O-butanoyl-(R)-carnitine(in) + Na(+)(in). The catalysed reaction is (S)-carnitine(out) + Na(+)(out) = (S)-carnitine(in) + Na(+)(in). It carries out the reaction an O-acyl-(R)-carnitine(out) + Na(+)(out) = an O-acyl-(R)-carnitine(in) + Na(+)(in). It catalyses the reaction L-glutamyl-L-arginyl-glycyl-L-methionyl-L-threonine(out) + Na(+)(out) = L-glutamyl-L-arginyl-glycyl-L-methionyl-L-threonine(in) + Na(+)(in). The enzyme catalyses N,N-dimethylglycine(out) + Na(+)(out) = N,N-dimethylglycine(in) + Na(+)(in). With respect to regulation, inhibited by emetine, quinidine and verapamil. The IC(50) of emetine is 4.2 uM. Not inhibited by valproic acid. Transport of (R)-carnitine is stimulated by cholesterol in the plasma membrane. In terms of biological role, sodium-ion dependent, high affinity carnitine transporter. Involved in the active cellular uptake of carnitine. Transports one sodium ion with one molecule of carnitine. Also transports organic cations such as tetraethylammonium (TEA) without the involvement of sodium. Also relative uptake activity ratio of carnitine to TEA is 11.3. May also contribute to regulate the transport of organic compounds in testis across the blood-testis-barrier. The protein is Organic cation/carnitine transporter 2 (Slc22a5) of Rattus norvegicus (Rat).